The chain runs to 162 residues: Probable chemoreceptor glutamine deamidase CheD (162 aa).

This sequence belongs to the CheD family.

It carries out the reaction L-glutaminyl-[protein] + H2O = L-glutamyl-[protein] + NH4(+). Functionally, probably deamidates glutamine residues to glutamate on methyl-accepting chemotaxis receptors (MCPs), playing an important role in chemotaxis. The protein is Probable chemoreceptor glutamine deamidase CheD of Clostridium botulinum (strain ATCC 19397 / Type A).